We begin with the raw amino-acid sequence, 260 residues long: Cell division protein FtsQ (260 aa).

Topologically, residues 1 to 26 are cytoplasmic; sequence MINKVLLEGQRITRSPQVKQHACGAS. A helical membrane pass occupies residues 27-47; that stretch reads FFLVVLLLIGGLLYSTISWMW. Topologically, residues 48–260 are periplasmic; it reads DEQRLPLSKL…QELTQEKNDD (213 aa). The POTRA domain maps to 52-122; the sequence is LPLSKLVLQG…DTIKVYLTEY (71 aa).

This sequence belongs to the FtsQ/DivIB family. FtsQ subfamily. As to quaternary structure, part of a complex composed of FtsB, FtsL and FtsQ.

It is found in the cell inner membrane. In terms of biological role, essential cell division protein. May link together the upstream cell division proteins, which are predominantly cytoplasmic, with the downstream cell division proteins, which are predominantly periplasmic. May control correct divisome assembly. This is Cell division protein FtsQ from Vibrio cholerae serotype O1 (strain ATCC 39315 / El Tor Inaba N16961).